The following is a 492-amino-acid chain: DEAD-box ATP-dependent RNA helicase RhpA (492 aa).

Positions 20 to 48 match the Q motif motif; sequence PSFNDLGLKESVLKSVYEAGFTSPSPIQE. Residues 51–220 enclose the Helicase ATP-binding domain; that stretch reads IPAVLQGRDV…DKILENPIKI (170 aa). 64–71 provides a ligand contact to ATP; it reads AQTGTGKT. The DEAD box motif lies at 168–171; that stretch reads DESD. The 163-residue stretch at 231–393 folds into the Helicase C-terminal domain; sequence DITQRFYVIN…EIPTINENQI (163 aa). Residues 445–492 are disordered; the sequence is AIQNPKEKTPKPSHKKTPQHERARSFKKGQHRDRHPKTNHHSKKPKRR. Residues 469–492 are compositionally biased toward basic residues; that stretch reads SFKKGQHRDRHPKTNHHSKKPKRR.

The protein belongs to the DEAD box helicase family. Homodimer. Interacts with RNase J (rnj), might be a member of a minimal RNA degradosome complex.

It localises to the cytoplasm. The enzyme catalyses ATP + H2O = ADP + phosphate + H(+). DEAD-box RNA helicase probably involved in RNA degradation. Unwinds dsRNA in both 5'- and 3'-directions. Background RNA-dependent ATPase activity is stimulated about 5-fold by RNaseJ (rnj). Stimulates the dsRNase activity of RNase J. The polypeptide is DEAD-box ATP-dependent RNA helicase RhpA (rhpA) (Helicobacter pylori (strain B128)).